A 553-amino-acid chain; its full sequence is CTP synthase (553 aa).

The amidoligase domain stretch occupies residues 1–266 (MTKNYIFITG…DNYICEYFKL (266 aa)). Serine 14 contacts CTP. Serine 14 is a UTP binding site. ATP contacts are provided by residues 15–20 (SLGKGI) and aspartate 72. Aspartate 72 and glutamate 140 together coordinate Mg(2+). Residues 147-149 (DIE), 187-192 (KTKPTQ), and lysine 223 each bind CTP. UTP-binding positions include 187 to 192 (KTKPTQ) and lysine 223. Position 239–241 (239–241 (KDV)) interacts with ATP. A Glutamine amidotransferase type-1 domain is found at 291 to 544 (IIGIIGKYIK…IKSAKKNKKN (254 aa)). Glycine 352 lines the L-glutamine pocket. Cysteine 379 functions as the Nucleophile; for glutamine hydrolysis in the catalytic mechanism. L-glutamine is bound by residues 380-383 (LGMQ), glutamate 403, and arginine 472. Residues histidine 517 and glutamate 519 contribute to the active site.

Belongs to the CTP synthase family. As to quaternary structure, homotetramer.

The enzyme catalyses UTP + L-glutamine + ATP + H2O = CTP + L-glutamate + ADP + phosphate + 2 H(+). It carries out the reaction L-glutamine + H2O = L-glutamate + NH4(+). It catalyses the reaction UTP + NH4(+) + ATP = CTP + ADP + phosphate + 2 H(+). Its pathway is pyrimidine metabolism; CTP biosynthesis via de novo pathway; CTP from UDP: step 2/2. With respect to regulation, allosterically activated by GTP, when glutamine is the substrate; GTP has no effect on the reaction when ammonia is the substrate. The allosteric effector GTP functions by stabilizing the protein conformation that binds the tetrahedral intermediate(s) formed during glutamine hydrolysis. Inhibited by the product CTP, via allosteric rather than competitive inhibition. Its function is as follows. Catalyzes the ATP-dependent amination of UTP to CTP with either L-glutamine or ammonia as the source of nitrogen. Regulates intracellular CTP levels through interactions with the four ribonucleotide triphosphates. In Buchnera aphidicola subsp. Schizaphis graminum (strain Sg), this protein is CTP synthase.